The following is a 325-amino-acid chain: Forkhead box protein B1 (325 aa).

The segment at residues 12–103 (QKPPYSYISL…GDMFENGSFL (92 aa)) is a DNA-binding region (fork-head). The segment covering 284–309 (LSNSPPSLSPTSSQTATSQSSPATPS) has biased composition (low complexity). Positions 284–325 (LSNSPPSLSPTSSQTATSQSSPATPSETLTSPASALHSVAVH) are disordered.

It is found in the nucleus. Its function is as follows. Transcription factor expressed by neural progenitor cells in specific regions of the embryonic neuroepithelium. Essential for the mammillary nuclei maintenance. Negatively regulates the proliferation of oligodendrocyte progenitors and promotes oligodendrocyte maturation. Also expressed in mammary glands, plays a role in lactation, controls development of mammary glands and the inferior colliculi of the midbrain in the central nervous system that regulates the milk-ejection reflex. The chain is Forkhead box protein B1 (FOXB1) from Homo sapiens (Human).